A 735-amino-acid polypeptide reads, in one-letter code: Disintegrin and metalloproteinase domain-containing protein 2 (735 aa).

Residues 1–16 (MWRVLFLLSGLGGLRM) form the signal peptide. Positions 17–174 (DSNFDSLPVQ…FKLQSVEPQQ (158 aa)) are excised as a propeptide. 2 N-linked (GlcNAc...) asparagine glycosylation sites follow: asparagine 122 and asparagine 220. At 175–686 (DFAKYIEMHV…ENIYHSKPMR (512 aa)) the chain is on the extracellular side. Residues 178–375 (KYIEMHVIVE…QKSQCLHNQP (198 aa)) form the Peptidase M12B domain. Cystine bridges form between cysteine 287/cysteine 370, cysteine 329/cysteine 354, cysteine 331/cysteine 336, and cysteine 445/cysteine 465. Asparagine 353, asparagine 459, and asparagine 566 each carry an N-linked (GlcNAc...) asparagine glycan. In terms of domain architecture, Disintegrin spans 384-473 (QAVCGNAKLE…SCPENHYVQT (90 aa)). One can recognise an EGF-like domain in the interval 612–645 (LGYDCTTDKCNDRGVCNNKKHCHCSASYLPPDCS). 3 disulfides stabilise this stretch: cysteine 616–cysteine 627, cysteine 621–cysteine 633, and cysteine 635–cysteine 644. Residues 687–707 (WPFFLFIPFFIIFCVLIAIMV) form a helical membrane-spanning segment. Topologically, residues 708–735 (KVNFQRKKWRTEDYSSDEQPESESEPKG) are cytoplasmic. At serine 729 the chain carries Phosphoserine.

In terms of processing, the prodomain and the metalloprotease domain are cleaved during the epididymal maturation of the spermatozoa. As to expression, expressed specifically in spermatogenic cells in the seminiferous cells. Not detected in fetal tissues.

It localises to the membrane. In terms of biological role, sperm surface membrane protein that may be involved in sperm-egg plasma membrane adhesion and fusion during fertilization. Could have a direct role in sperm-zona binding or migration of sperm from the uterus into the oviduct. Interactions with egg membrane could be mediated via binding between its disintegrin-like domain to one or more integrins receptors on the egg. This is a non catalytic metalloprotease-like protein. In Homo sapiens (Human), this protein is Disintegrin and metalloproteinase domain-containing protein 2 (ADAM2).